Here is a 51-residue protein sequence, read N- to C-terminus: Cytochrome b559 subunit beta (51 aa).

The chain crosses the membrane as a helical span at residues 26-42; it reads WLAVHALTVPTIFFLGA. Heme is bound at residue His-30.

This sequence belongs to the PsbE/PsbF family. As to quaternary structure, heterodimer of an alpha subunit and a beta subunit. PSII is composed of 1 copy each of membrane proteins PsbA, PsbB, PsbC, PsbD, PsbE, PsbF, PsbH, PsbI, PsbJ, PsbK, PsbL, PsbM, PsbT, PsbX, Psb30/Ycf12, peripheral proteins PsbO, CyanoQ (PsbQ), PsbU, PsbV and a large number of cofactors. It forms dimeric complexes. The cofactor is heme b.

The protein resides in the cell inner membrane. Functionally, this b-type cytochrome is tightly associated with the reaction center of photosystem II (PSII). PSII is a light-driven water:plastoquinone oxidoreductase that uses light energy to abstract electrons from H(2)O, generating O(2) and a proton gradient subsequently used for ATP formation. It consists of a core antenna complex that captures photons, and an electron transfer chain that converts photonic excitation into a charge separation. This is Cytochrome b559 subunit beta from Gloeobacter violaceus (strain ATCC 29082 / PCC 7421).